Reading from the N-terminus, the 135-residue chain is Large ribosomal subunit protein uL16c (135 aa).

It belongs to the universal ribosomal protein uL16 family. As to quaternary structure, part of the 50S ribosomal subunit.

It is found in the plastid. It localises to the chloroplast. This is Large ribosomal subunit protein uL16c from Daucus carota (Wild carrot).